Reading from the N-terminus, the 411-residue chain is Tyrosine--tRNA ligase (411 aa).

L-tyrosine is bound at residue Y34. Positions 39 to 48 (CTATSLHIGS) match the 'HIGH' region motif. L-tyrosine contacts are provided by Y171 and Q175. The short motif at 231–235 (KMGKT) is the 'KMSKS' region element. K234 provides a ligand contact to ATP. The 67-residue stretch at 345 to 411 (ISAYELFHEA…GKKKHILVRV (67 aa)) folds into the S4 RNA-binding domain.

Belongs to the class-I aminoacyl-tRNA synthetase family. TyrS type 1 subfamily. In terms of assembly, homodimer.

The protein localises to the cytoplasm. The enzyme catalyses tRNA(Tyr) + L-tyrosine + ATP = L-tyrosyl-tRNA(Tyr) + AMP + diphosphate + H(+). In terms of biological role, catalyzes the attachment of tyrosine to tRNA(Tyr) in a two-step reaction: tyrosine is first activated by ATP to form Tyr-AMP and then transferred to the acceptor end of tRNA(Tyr). The sequence is that of Tyrosine--tRNA ligase from Rickettsia conorii (strain ATCC VR-613 / Malish 7).